The chain runs to 141 residues: Hemoglobin subunit alpha (141 aa).

In terms of domain architecture, Globin spans 1–141 (VLSDKDKTNV…VSTVLTSKYR (141 aa)). Ser-3 carries the post-translational modification Phosphoserine. N6-succinyllysine is present on Lys-7. Thr-8 bears the Phosphothreonine mark. N6-succinyllysine is present on Lys-11. An N6-acetyllysine; alternate modification is found at Lys-16. Residue Lys-16 is modified to N6-succinyllysine; alternate. Tyr-24 bears the Phosphotyrosine mark. Position 35 is a phosphoserine (Ser-35). An N6-succinyllysine modification is found at Lys-40. A Phosphoserine modification is found at Ser-49. His-58 is a binding site for O2. His-87 provides a ligand contact to heme b. Position 102 is a phosphoserine (Ser-102). A Phosphothreonine modification is found at Thr-108. At Ser-124 the chain carries Phosphoserine. Thr-134 and Thr-137 each carry phosphothreonine. Ser-138 bears the Phosphoserine mark.

This sequence belongs to the globin family. Heterotetramer of two alpha chains and two beta chains. In terms of tissue distribution, red blood cells.

Functionally, involved in oxygen transport from the lung to the various peripheral tissues. Its function is as follows. Hemopressin acts as an antagonist peptide of the cannabinoid receptor CNR1. Hemopressin-binding efficiently blocks cannabinoid receptor CNR1 and subsequent signaling. This chain is Hemoglobin subunit alpha (HBA), found in Elephas maximus (Indian elephant).